Reading from the N-terminus, the 938-residue chain is Isoleucine--tRNA ligase (938 aa).

The short motif at 58-68 is the 'HIGH' region element; it reads PYANGHLHMGH. L-isoleucyl-5'-AMP is bound at residue Glu-566. The short motif at 607 to 611 is the 'KMSKS' region element; the sequence is KMSKS. Lys-610 is an ATP binding site. Zn(2+) contacts are provided by Cys-906, Cys-909, Cys-926, and Cys-929.

This sequence belongs to the class-I aminoacyl-tRNA synthetase family. IleS type 1 subfamily. Monomer. Zn(2+) serves as cofactor.

It is found in the cytoplasm. The enzyme catalyses tRNA(Ile) + L-isoleucine + ATP = L-isoleucyl-tRNA(Ile) + AMP + diphosphate. Its function is as follows. Catalyzes the attachment of isoleucine to tRNA(Ile). As IleRS can inadvertently accommodate and process structurally similar amino acids such as valine, to avoid such errors it has two additional distinct tRNA(Ile)-dependent editing activities. One activity is designated as 'pretransfer' editing and involves the hydrolysis of activated Val-AMP. The other activity is designated 'posttransfer' editing and involves deacylation of mischarged Val-tRNA(Ile). The sequence is that of Isoleucine--tRNA ligase from Desulfovibrio desulfuricans (strain ATCC 27774 / DSM 6949 / MB).